The primary structure comprises 362 residues: 3-dehydroquinate synthase (362 aa).

Residues 71–76 (DGERYK), 105–109 (GVIGD), 129–130 (TT), Lys-142, Lys-151, and 169–172 (CLKT) each bind NAD(+). Residues Glu-184, His-247, and His-264 each coordinate Zn(2+).

The protein belongs to the sugar phosphate cyclases superfamily. Dehydroquinate synthase family. Co(2+) serves as cofactor. Zn(2+) is required as a cofactor. It depends on NAD(+) as a cofactor.

Its subcellular location is the cytoplasm. The enzyme catalyses 7-phospho-2-dehydro-3-deoxy-D-arabino-heptonate = 3-dehydroquinate + phosphate. Its pathway is metabolic intermediate biosynthesis; chorismate biosynthesis; chorismate from D-erythrose 4-phosphate and phosphoenolpyruvate: step 2/7. Catalyzes the conversion of 3-deoxy-D-arabino-heptulosonate 7-phosphate (DAHP) to dehydroquinate (DHQ). The sequence is that of 3-dehydroquinate synthase from Salmonella arizonae (strain ATCC BAA-731 / CDC346-86 / RSK2980).